The primary structure comprises 632 residues: Threonine--tRNA ligase (632 aa).

One can recognise a TGS domain in the interval M1–Q59. The catalytic stretch occupies residues D240–P532. 3 residues coordinate Zn(2+): C332, H383, and H509.

This sequence belongs to the class-II aminoacyl-tRNA synthetase family. As to quaternary structure, homodimer. The cofactor is Zn(2+).

It localises to the cytoplasm. The catalysed reaction is tRNA(Thr) + L-threonine + ATP = L-threonyl-tRNA(Thr) + AMP + diphosphate + H(+). Functionally, catalyzes the attachment of threonine to tRNA(Thr) in a two-step reaction: L-threonine is first activated by ATP to form Thr-AMP and then transferred to the acceptor end of tRNA(Thr). Also edits incorrectly charged L-seryl-tRNA(Thr). The protein is Threonine--tRNA ligase of Wolbachia sp. subsp. Brugia malayi (strain TRS).